Consider the following 138-residue polypeptide: Transcriptional regulator MraZ (138 aa).

2 SpoVT-AbrB domains span residues 3–45 (EFQH…PLAE) and 74–117 (ATEC…AAER).

It belongs to the MraZ family. As to quaternary structure, forms oligomers.

It localises to the cytoplasm. The protein resides in the nucleoid. The sequence is that of Transcriptional regulator MraZ from Symbiobacterium thermophilum (strain DSM 24528 / JCM 14929 / IAM 14863 / T).